Here is a 71-residue protein sequence, read N- to C-terminus: uncharacterized protein (71 aa).

This is an uncharacterized protein from Acheta domesticus (House cricket).